The chain runs to 354 residues: UDP-N-acetylglucosamine--N-acetylmuramyl-(pentapeptide) pyrophosphoryl-undecaprenol N-acetylglucosamine transferase 3 (354 aa).

UDP-N-acetyl-alpha-D-glucosamine is bound by residues 12–14 (TAG), R163, S193, and Q287.

This sequence belongs to the glycosyltransferase 28 family. MurG subfamily.

The protein localises to the cell membrane. It carries out the reaction di-trans,octa-cis-undecaprenyl diphospho-N-acetyl-alpha-D-muramoyl-L-alanyl-D-glutamyl-meso-2,6-diaminopimeloyl-D-alanyl-D-alanine + UDP-N-acetyl-alpha-D-glucosamine = di-trans,octa-cis-undecaprenyl diphospho-[N-acetyl-alpha-D-glucosaminyl-(1-&gt;4)]-N-acetyl-alpha-D-muramoyl-L-alanyl-D-glutamyl-meso-2,6-diaminopimeloyl-D-alanyl-D-alanine + UDP + H(+). It participates in cell wall biogenesis; peptidoglycan biosynthesis. Cell wall formation. Catalyzes the transfer of a GlcNAc subunit on undecaprenyl-pyrophosphoryl-MurNAc-pentapeptide (lipid intermediate I) to form undecaprenyl-pyrophosphoryl-MurNAc-(pentapeptide)GlcNAc (lipid intermediate II). The protein is UDP-N-acetylglucosamine--N-acetylmuramyl-(pentapeptide) pyrophosphoryl-undecaprenol N-acetylglucosamine transferase 3 of Bacillus cereus (strain ATCC 14579 / DSM 31 / CCUG 7414 / JCM 2152 / NBRC 15305 / NCIMB 9373 / NCTC 2599 / NRRL B-3711).